The chain runs to 189 residues: Small ribosomal subunit protein uS5 (189 aa).

An S5 DRBM domain is found at 27-90 (FEERLLEAAR…EDAKKKTIRV (64 aa)).

This sequence belongs to the universal ribosomal protein uS5 family. In terms of assembly, part of the 30S ribosomal subunit. Contacts proteins S4 and S8.

Its function is as follows. With S4 and S12 plays an important role in translational accuracy. In terms of biological role, located at the back of the 30S subunit body where it stabilizes the conformation of the head with respect to the body. In Hydrogenobaculum sp. (strain Y04AAS1), this protein is Small ribosomal subunit protein uS5.